Reading from the N-terminus, the 188-residue chain is Protein-arginine kinase activator protein (188 aa).

4 consecutive short sequence motifs (CXXC metal binding motif) follow at residues 3-6 (CENC), 29-32 (CQTC), 87-90 (CPSC), and 105-108 (CANC). In terms of domain architecture, UVR spans 145–180 (KRKIEEKNEYLKKLIEIQDFEEAAIVRDEIKALKAE).

As to quaternary structure, interacts with McsB and CtsR; the CXXC motifs are needed for the binding.

Its function is as follows. Activates the phosphorylation activity of the protein-arginine kinase McsB. May function as an important molecule for oxidative tolerance in various types of stress including that of heavy metals. Binds to Cu(2+), Zn(2+), Co(2+) and Cd(2+) via its CXXC metal binding motifs. The polypeptide is Protein-arginine kinase activator protein (Staphylococcus aureus (strain NCTC 8325 / PS 47)).